We begin with the raw amino-acid sequence, 234 residues long: GTP cyclohydrolase 1 type 2 homolog (234 aa).

A divalent metal cation contacts are provided by His-61, His-62, Asp-80, His-195, and Glu-199.

This sequence belongs to the GTP cyclohydrolase I type 2/NIF3 family. As to quaternary structure, homohexamer.

This Methanothermobacter thermautotrophicus (strain ATCC 29096 / DSM 1053 / JCM 10044 / NBRC 100330 / Delta H) (Methanobacterium thermoautotrophicum) protein is GTP cyclohydrolase 1 type 2 homolog.